The following is a 371-amino-acid chain: Riboflavin biosynthesis protein RibD (371 aa).

The CMP/dCMP-type deaminase domain maps to 1–122 (MEEYYMNTAI…MLEEAGIEVK (122 aa)). The segment at 1–144 (MEEYYMNTAI…KMFLHFMRTG (144 aa)) is deaminase. Zn(2+) is bound at residue His49. Glu51 serves as the catalytic Proton donor. The Zn(2+) site is built by Cys74 and Cys83. The segment at 145–371 (LPYVTLKAAA…KDGDDVYRNR (227 aa)) is reductase. NADP(+) is bound at residue Ala153. Substrate is bound at residue Ser167. NADP(+) is bound at residue Trp169. Residue Arg183 participates in substrate binding. Thr195 and Asp199 together coordinate NADP(+). The substrate site is built by Leu203 and Arg206. Thr221 provides a ligand contact to NADP(+). Substrate is bound at residue Glu290. 292–298 (GASVHGS) lines the NADP(+) pocket.

The protein in the N-terminal section; belongs to the cytidine and deoxycytidylate deaminase family. This sequence in the C-terminal section; belongs to the HTP reductase family. The cofactor is Zn(2+).

It carries out the reaction 2,5-diamino-6-hydroxy-4-(5-phosphoribosylamino)-pyrimidine + H2O + H(+) = 5-amino-6-(5-phospho-D-ribosylamino)uracil + NH4(+). The catalysed reaction is 5-amino-6-(5-phospho-D-ribitylamino)uracil + NADP(+) = 5-amino-6-(5-phospho-D-ribosylamino)uracil + NADPH + H(+). The protein operates within cofactor biosynthesis; riboflavin biosynthesis; 5-amino-6-(D-ribitylamino)uracil from GTP: step 2/4. It participates in cofactor biosynthesis; riboflavin biosynthesis; 5-amino-6-(D-ribitylamino)uracil from GTP: step 3/4. Converts 2,5-diamino-6-(ribosylamino)-4(3h)-pyrimidinone 5'-phosphate into 5-amino-6-(ribosylamino)-2,4(1h,3h)-pyrimidinedione 5'-phosphate. In Bacillus amyloliquefaciens (Bacillus velezensis), this protein is Riboflavin biosynthesis protein RibD (ribD).